The sequence spans 381 residues: 40-kDa huntingtin-associated protein (381 aa).

Alanine 2 carries the post-translational modification N-acetylalanine. A Nuclear localization signal motif is present at residues 34–36; that stretch reads KKR. The disordered stretch occupies residues 221–265; it reads QLELLPQPPSGPQPPLSGPQPRPVLGSTLPLPQPPDHAPGSVAPS. Residues 226 to 242 are compositionally biased toward pro residues; that stretch reads PQPPSGPQPPLSGPQPR.

As to quaternary structure, interacts with HTT (via C-terminus). Interacts with RAB5A. Found in a complex with F8A1/F8A2/F8A3, HTT and RAB5A; mediates the recruitment of HTT by RAB5A onto early endosomes. In terms of tissue distribution, produced abundantly in a wide variety of cell types.

It is found in the cytoplasm. Its subcellular location is the nucleus. The protein resides in the early endosome. The protein localises to the nuclear body. Functionally, RAB5A effector molecule that is involved in vesicular trafficking of early endosomes. Mediates the recruitment of HTT by RAB5A onto early endosomes. The HTT-F8A1/F8A2/F8A3-RAB5A complex stimulates early endosomal interaction with actin filaments and inhibits interaction with microtubules, leading to the reduction of endosome motility. The chain is 40-kDa huntingtin-associated protein (F8a1) from Mus musculus (Mouse).